The sequence spans 320 residues: Acetyl-coenzyme A carboxylase carboxyl transferase subunit alpha (320 aa).

Residues 42–295 enclose the CoA carboxyltransferase C-terminal domain; sequence IEEKAVQALN…GDAIAAAFAE (254 aa).

The protein belongs to the AccA family. Acetyl-CoA carboxylase is a heterohexamer composed of biotin carboxyl carrier protein (AccB), biotin carboxylase (AccC) and two subunits each of ACCase subunit alpha (AccA) and ACCase subunit beta (AccD).

It localises to the cytoplasm. The catalysed reaction is N(6)-carboxybiotinyl-L-lysyl-[protein] + acetyl-CoA = N(6)-biotinyl-L-lysyl-[protein] + malonyl-CoA. The protein operates within lipid metabolism; malonyl-CoA biosynthesis; malonyl-CoA from acetyl-CoA: step 1/1. In terms of biological role, component of the acetyl coenzyme A carboxylase (ACC) complex. First, biotin carboxylase catalyzes the carboxylation of biotin on its carrier protein (BCCP) and then the CO(2) group is transferred by the carboxyltransferase to acetyl-CoA to form malonyl-CoA. This chain is Acetyl-coenzyme A carboxylase carboxyl transferase subunit alpha, found in Rhodopseudomonas palustris (strain HaA2).